The following is a 386-amino-acid chain: Rhomboid domain-containing protein 3 (386 aa).

5 consecutive transmembrane segments (helical) span residues 20–40 (VLML…LVLA), 58–78 (LGHT…TVGW), 92–112 (ASAL…GLGL), 141–161 (GALP…LLSS), and 163–183 (PPFL…AGAF). Residues 324–362 (VSSLRLQQLERMGFPTEQAVVALAATGRVEGAVSLLVGG) form the UBA domain.

The protein resides in the membrane. This is Rhomboid domain-containing protein 3 (RHBDD3) from Homo sapiens (Human).